A 338-amino-acid polypeptide reads, in one-letter code: 4-hydroxythreonine-4-phosphate dehydrogenase (338 aa).

Substrate-binding residues include His-140 and Thr-141. 3 residues coordinate a divalent metal cation: His-172, His-217, and His-271. Residues Lys-279, Asn-288, and Arg-297 each contribute to the substrate site.

It belongs to the PdxA family. As to quaternary structure, homodimer. A divalent metal cation serves as cofactor.

The protein resides in the cytoplasm. It carries out the reaction 4-(phosphooxy)-L-threonine + NAD(+) = 3-amino-2-oxopropyl phosphate + CO2 + NADH. Its pathway is cofactor biosynthesis; pyridoxine 5'-phosphate biosynthesis; pyridoxine 5'-phosphate from D-erythrose 4-phosphate: step 4/5. Catalyzes the NAD(P)-dependent oxidation of 4-(phosphooxy)-L-threonine (HTP) into 2-amino-3-oxo-4-(phosphooxy)butyric acid which spontaneously decarboxylates to form 3-amino-2-oxopropyl phosphate (AHAP). The sequence is that of 4-hydroxythreonine-4-phosphate dehydrogenase from Prosthecochloris aestuarii (strain DSM 271 / SK 413).